The chain runs to 110 residues: UPF0339 protein PA0329 (110 aa).

Tandem repeats lie at residues 10–58 (AKDG…AFEV) and 61–109 (ANNG…LSDE). A disordered region spans residues 91–110 (EAGVQSVKRATPEAGLSDES).

Belongs to the UPF0339 family. Duplicated subfamily.

The protein is UPF0339 protein PA0329 of Pseudomonas aeruginosa (strain ATCC 15692 / DSM 22644 / CIP 104116 / JCM 14847 / LMG 12228 / 1C / PRS 101 / PAO1).